An 896-amino-acid polypeptide reads, in one-letter code: C-type lectin domain-containing protein 180 (896 aa).

A signal peptide spans 1–18 (MRHLIFTGFVLTLTALEA). In terms of domain architecture, C-type lectin spans 54–178 (PWGDLYQFRA…CESTSPDHHA (125 aa)). Asn-133 carries an N-linked (GlcNAc...) asparagine glycan. A disulfide bridge links Cys-154 with Cys-169. N-linked (GlcNAc...) asparagine glycans are attached at residues Asn-221 and Asn-235. 4 disordered regions span residues 243–264 (STVK…SVSK), 354–436 (VKQE…LAPE), 492–519 (EKLE…EEQK), and 557–809 (KVKA…TTKP). The span at 250–260 (SEEETSSEEEE) shows a compositional bias: acidic residues. Basic and acidic residues-rich tracts occupy residues 354-382 (VKQE…KISE) and 395-406 (DMPKADIEPPKE). Positions 407-426 (EDCDEEGSGSGSGEEDEKDE) are enriched in acidic residues. Positions 427 to 436 (SSEKIELAPE) are enriched in basic and acidic residues. 3 stretches are compositionally biased toward basic and acidic residues: residues 575–590 (KSAK…KVGN), 607–663 (QNRE…ETKL), and 683–692 (EEPKSDKDSE). Residues 727–739 (STTTESTTVAVKE) show a composition bias toward low complexity. Positions 740-768 (VPVDEIEKIAKLEAKQHTEDEKVTVETKQ) are enriched in basic and acidic residues. A compositionally biased stretch (low complexity) spans 773 to 809 (TPAPTTSEKTSTTAAPSTKPAEETTTTTEAPSTTTKP).

It localises to the secreted. The protein is C-type lectin domain-containing protein 180 (clec-180) of Caenorhabditis elegans.